Consider the following 568-residue polypeptide: Phosphoprotein (568 aa).

Residues 1-24 (MDQDAFFFERDPEAEGEAPRKQES) are disordered. Basic and acidic residues predominate over residues 7–23 (FFERDPEAEGEAPRKQE). Residues 33–41 (DVVLSYKPT) form an N0 binding region. The segment at 45 to 324 (EDRSWLHGII…ANEEETSNTS (280 aa)) is disordered. Basic and acidic residues predominate over residues 58–105 (EENKPSCKADDNNKDRAISTPTQDHRSGEESGISRRTSESKTETHARL). Residues 107 to 121 (DQQSIHRASRRGTSP) are compositionally biased toward polar residues. Composition is skewed to basic and acidic residues over residues 132-144 (RNTR…PNER) and 151-167 (LTDE…KREE). The span at 190–208 (RTNNNGRSMETSSTHSTRI) shows a compositional bias: polar residues. A compositionally biased stretch (basic and acidic residues) spans 239–253 (TRSERTQNSELHKST). Over residues 294-305 (YTMNNANNNTKS) the composition is skewed to polar residues. The multimerization stretch occupies residues 344 to 411 (FELSRSASHV…SSRDLHKRFS (68 aa)). The stretch at 387–416 (EENRTLLKQIQEEINSSRDLHKRFSEYQKE) forms a coiled coil. The segment at 412–445 (EYQKEQNSLMMANLSTLHIITDRGGKTGDPSDTT) is l protein binding. The tract at residues 434–455 (RGGKTGDPSDTTRSPSVFTKGK) is disordered. Polar residues predominate over residues 441 to 450 (PSDTTRSPSV). An interaction with the nucleocapsid (N-RNA) region spans residues 479 to 568 (DLIREDELRD…FEEDIDSLTN (90 aa)).

Belongs to the respirovirus P protein family. As to quaternary structure, homotetramer. Interacts (via multimerization domain) with polymerase L; this interaction forms the polymerase complex. Interacts (via N-terminus) with N0; this interaction allows P to chaperon N0 before encapsidation and form the N-P complex. Interacts (via C-terminus) with N-RNA template; this interaction positions the polymerase on the template.

Functionally, essential cofactor of the RNA polymerase L that plays a central role in the transcription and replication by forming the polymerase complex with RNA polymerase L and recruiting L to the genomic N-RNA template for RNA synthesis. Also plays a central role in the encapsidation of nascent RNA chains by forming the encapsidation complex with the nucleocapsid protein N (N-P complex). Acts as a chaperone for newly synthesized free N protein, so-called N0, allowing encapsidation of nascent RNA chains during replication. The nucleoprotein protein N prevents excessive phosphorylation of P, which leads to down-regulation of viral transcription/ replication. Participates, together with N, in the formation of viral factories (viroplasms), which are large inclusions in the host cytoplasm where replication takes place. Recruits host PI4KB and remodel the host endoplasmic reticulum membrane to form viral replication factories. This chain is Phosphoprotein (P/C), found in Human parainfluenza 1 virus (strain C39) (HPIV-1).